Here is a 723-residue protein sequence, read N- to C-terminus: Peroxisomal bifunctional enzyme (723 aa).

Residues 1-282 (MAEYTRLHNA…LAERKANKWS (282 aa)) form an enoyl-CoA hydratase / isomerase region. Lys-38 carries the N6-succinyllysine modification. Gly-101 contributes to the substrate binding site. N6-acetyllysine; alternate is present on Lys-165. Residue Lys-165 is modified to N6-succinyllysine; alternate. Lys-171 is modified (N6-acetyllysine). Lys-219 carries the post-translational modification N6-acetyllysine; alternate. Lys-219 bears the N6-succinyllysine; alternate mark. Residue Lys-250 is modified to N6-acetyllysine. Residues Lys-280 and Lys-290 each carry the N6-succinyllysine modification. The segment at 283-572 (TPSGASWKTA…DVLCELGRFG (290 aa)) is 3-hydroxyacyl-CoA dehydrogenase. 3 positions are modified to N6-acetyllysine: Lys-346, Lys-350, and Lys-464. The residue at position 532 (Lys-532) is an N6-succinyllysine. A Phosphothreonine modification is found at Thr-548. Residue Lys-577 is modified to N6-succinyllysine. N6-acetyllysine; alternate occurs at positions 584, 591, and 710. 3 positions are modified to N6-succinyllysine; alternate: Lys-584, Lys-591, and Lys-710. A disordered region spans residues 699 to 723 (KKLASQGNPPQKEWQSLAGSPSSKL). Residues 703 to 723 (SQGNPPQKEWQSLAGSPSSKL) are compositionally biased toward polar residues. Ser-718 carries the phosphoserine modification. A Microbody targeting signal motif is present at residues 721-723 (SKL). Lys-722 bears the N6-succinyllysine mark.

In the N-terminal section; belongs to the enoyl-CoA hydratase/isomerase family. This sequence in the C-terminal section; belongs to the 3-hydroxyacyl-CoA dehydrogenase family. As to quaternary structure, monomer. Post-translationally, acetylated, leading to enhanced enzyme activity. Acetylation is enhanced by up to 80% after treatment either with trichostin A (TSA) or with nicotinamide (NAM) with highest increase on Lys-346. Acetylation and enzyme activity increased by about 1.5% on addition of fatty acids.

It localises to the peroxisome. The enzyme catalyses a (3S)-3-hydroxyacyl-CoA = a (2E)-enoyl-CoA + H2O. It catalyses the reaction a 4-saturated-(3S)-3-hydroxyacyl-CoA = a (3E)-enoyl-CoA + H2O. The catalysed reaction is a (3Z)-enoyl-CoA = a 4-saturated (2E)-enoyl-CoA. It carries out the reaction a (3E)-enoyl-CoA = a 4-saturated (2E)-enoyl-CoA. The enzyme catalyses a (3S)-3-hydroxyacyl-CoA + NAD(+) = a 3-oxoacyl-CoA + NADH + H(+). It catalyses the reaction (2S,3S)-3-hydroxy-2-methylbutanoyl-CoA = (2E)-2-methylbut-2-enoyl-CoA + H2O. The catalysed reaction is (3S)-hydroxyhexadecanoyl-CoA + NAD(+) = 3-oxohexadecanoyl-CoA + NADH + H(+). It carries out the reaction (3S)-hydroxyhexadecanoyl-CoA = (2E)-hexadecenoyl-CoA + H2O. The enzyme catalyses (2E)-hexadecenedioyl-CoA + H2O = (3S)-hydroxyhexadecanedioyl-CoA. It catalyses the reaction (3S)-hydroxyhexadecanedioyl-CoA + NAD(+) = 3-oxohexadecanedioyl-CoA + NADH + H(+). The catalysed reaction is (3E,5Z)-tetradecadienoyl-CoA = (2E,5Z)-tetradecadienoyl-CoA. It carries out the reaction (3E,5Z)-octadienoyl-CoA = (2E,5Z)-octadienoyl-CoA. The enzyme catalyses (3S)-hydroxydecanoyl-CoA + NAD(+) = 3-oxodecanoyl-CoA + NADH + H(+). It catalyses the reaction (3E)-decenoyl-CoA = (2E)-decenoyl-CoA. The catalysed reaction is (3Z)-hexenoyl-CoA = (2E)-hexenoyl-CoA. It carries out the reaction (3E)-hexenoyl-CoA = (2E)-hexenoyl-CoA. The enzyme catalyses (3S)-hydroxydecanoyl-CoA = (2E)-decenoyl-CoA + H2O. It catalyses the reaction (3S)-hydroxyhexanoyl-CoA = (2E)-hexenoyl-CoA + H2O. The protein operates within lipid metabolism; fatty acid beta-oxidation. Enzyme activity enhanced by acetylation. Functionally, peroxisomal trifunctional enzyme possessing 2-enoyl-CoA hydratase, 3-hydroxyacyl-CoA dehydrogenase, and delta 3, delta 2-enoyl-CoA isomerase activities. Catalyzes two of the four reactions of the long chain fatty acids peroxisomal beta-oxidation pathway. Can also use branched-chain fatty acids such as 2-methyl-2E-butenoyl-CoA as a substrate, which is hydrated into (2S,3S)-3-hydroxy-2-methylbutanoyl-CoA. Optimal isomerase for 2,5 double bonds into 3,5 form isomerization in a range of enoyl-CoA species. Also able to isomerize both 3-cis and 3-trans double bonds into the 2-trans form in a range of enoyl-CoA species. Regulates the amount of medium-chain dicarboxylic fatty acids which are essential regulators of all fatty acid oxidation pathways. Also involved in the degradation of long-chain dicarboxylic acids through peroxisomal beta-oxidation. In Pongo abelii (Sumatran orangutan), this protein is Peroxisomal bifunctional enzyme (EHHADH).